The sequence spans 130 residues: MPNNYRLAKVSSLLKKEITLILQNELEIDLISDHFVNISKIDLSGDLQHCKIYITSTAQEKVKKEIVSNLNTAKSSIRHSLGKRIEMRRVPEIIFKDDVVLDKGLSVLKLLDELKNKNQNHNVEDEDAKS.

Belongs to the RbfA family. In terms of assembly, monomer. Binds 30S ribosomal subunits, but not 50S ribosomal subunits or 70S ribosomes.

The protein resides in the cytoplasm. Functionally, one of several proteins that assist in the late maturation steps of the functional core of the 30S ribosomal subunit. Associates with free 30S ribosomal subunits (but not with 30S subunits that are part of 70S ribosomes or polysomes). Required for efficient processing of 16S rRNA. May interact with the 5'-terminal helix region of 16S rRNA. The chain is Ribosome-binding factor A from Prochlorococcus marinus (strain MIT 9215).